The primary structure comprises 119 residues: Protein yippee-like 1 (119 aa).

Residues Arg-19–Asn-116 enclose the Yippee domain. Positions 23, 26, 79, and 82 each coordinate Zn(2+). A Nuclear localization signal motif is present at residues Lys-99 to Lys-104.

It belongs to the yippee family.

It is found in the nucleus. May play a role in epithelioid conversion of fibroblasts. The sequence is that of Protein yippee-like 1 (YPEL1) from Chlorocebus aethiops (Green monkey).